Reading from the N-terminus, the 234-residue chain is Zinc finger FYVE domain-containing protein 21 (234 aa).

The FYVE-type zinc finger occupies 44-104; the sequence is DKECPRCMQC…QCADCALVSH (61 aa). Residues cysteine 50, cysteine 53, cysteine 66, cysteine 69, cysteine 74, cysteine 77, cysteine 96, and cysteine 99 each coordinate Zn(2+). The interval 107–234 is PH-like; the sequence is AEFYDKQLKV…TKLLYESRDQ (128 aa).

Interacts with PTK2/FAK1. In terms of tissue distribution, widely expressed.

Its subcellular location is the cell junction. The protein localises to the focal adhesion. It localises to the cytoplasmic vesicle. The protein resides in the endosome. Plays a role in cell adhesion, and thereby in cell motility which requires repeated formation and disassembly of focal adhesions. Regulates microtubule-induced PTK2/FAK1 dephosphorylation, an event important for focal adhesion disassembly, as well as integrin beta-1/ITGB1 cell surface expression. In Mus musculus (Mouse), this protein is Zinc finger FYVE domain-containing protein 21 (Zfyve21).